The primary structure comprises 249 residues: Leucyl/phenylalanyl-tRNA--protein transferase (249 aa).

The interval 1 to 21 (MSRTLPHLLSSDPASPFPPAE) is disordered.

It belongs to the L/F-transferase family.

The protein resides in the cytoplasm. It carries out the reaction N-terminal L-lysyl-[protein] + L-leucyl-tRNA(Leu) = N-terminal L-leucyl-L-lysyl-[protein] + tRNA(Leu) + H(+). It catalyses the reaction N-terminal L-arginyl-[protein] + L-leucyl-tRNA(Leu) = N-terminal L-leucyl-L-arginyl-[protein] + tRNA(Leu) + H(+). The catalysed reaction is L-phenylalanyl-tRNA(Phe) + an N-terminal L-alpha-aminoacyl-[protein] = an N-terminal L-phenylalanyl-L-alpha-aminoacyl-[protein] + tRNA(Phe). In terms of biological role, functions in the N-end rule pathway of protein degradation where it conjugates Leu, Phe and, less efficiently, Met from aminoacyl-tRNAs to the N-termini of proteins containing an N-terminal arginine or lysine. This Xanthomonas campestris pv. campestris (strain 8004) protein is Leucyl/phenylalanyl-tRNA--protein transferase.